Reading from the N-terminus, the 330-residue chain is Nitrilase 3 (330 aa).

Residues 4–273 (VKAAAVQISP…EGEVIVDLDF (270 aa)) form the CN hydrolase domain. Glu-44 functions as the Proton acceptor in the catalytic mechanism. Lys-128 acts as the Proton donor in catalysis. Catalysis depends on Cys-162, which acts as the Nucleophile. The segment at 310–330 (RAAHPVSGAEQGPEDLRTPAA) is disordered.

It belongs to the carbon-nitrogen hydrolase superfamily. Nitrilase family.

It catalyses the reaction a nitrile + 2 H2O = a carboxylate + NH4(+). Functionally, nitrilases catalyze the mild hydrolytic conversion of organonitriles directly to the corresponding carboxylic acids. This chain is Nitrilase 3, found in Unknown prokaryotic organism.